The following is a 422-amino-acid chain: Dihydrolipoyllysine-residue succinyltransferase component of 2-oxoglutarate dehydrogenase complex (422 aa).

Positions Met-1–Gly-76 constitute a Lipoyl-binding domain. Position 42 is an N6-lipoyllysine (Lys-42). Residues Glu-77–Asn-184 form a disordered region. Composition is skewed to polar residues over residues Gly-80–Gln-94 and Asn-116–Pro-130. Positions Asn-127 to Gln-163 constitute a Peripheral subunit-binding (PSBD) domain. The span at Asp-152–Gln-163 shows a compositional bias: basic and acidic residues. Low complexity predominate over residues Gln-164–Pro-176. Active-site residues include His-393 and Asp-397.

It belongs to the 2-oxoacid dehydrogenase family. In terms of assembly, forms a 24-polypeptide structural core with octahedral symmetry. Part of the 2-oxoglutarate dehydrogenase (OGDH) complex composed of E1 (2-oxoglutarate dehydrogenase), E2 (dihydrolipoamide succinyltransferase) and E3 (dihydrolipoamide dehydrogenase); the complex contains multiple copies of the three enzymatic components (E1, E2 and E3). (R)-lipoate is required as a cofactor.

The enzyme catalyses N(6)-[(R)-dihydrolipoyl]-L-lysyl-[protein] + succinyl-CoA = N(6)-[(R)-S(8)-succinyldihydrolipoyl]-L-lysyl-[protein] + CoA. It functions in the pathway amino-acid degradation; L-lysine degradation via saccharopine pathway; glutaryl-CoA from L-lysine: step 6/6. Functionally, E2 component of the 2-oxoglutarate dehydrogenase (OGDH) complex which catalyzes the second step in the conversion of 2-oxoglutarate to succinyl-CoA and CO(2). The polypeptide is Dihydrolipoyllysine-residue succinyltransferase component of 2-oxoglutarate dehydrogenase complex (odhB) (Staphylococcus aureus (strain Mu50 / ATCC 700699)).